Reading from the N-terminus, the 179-residue chain is Cytochrome c-type biogenesis protein CcmE (179 aa).

Residues 1-8 (MTPRRKSR) are Cytoplasmic-facing. Residues 9–29 (MTVILFVLLGISIASALVLYA) traverse the membrane as a helical; Signal-anchor for type II membrane protein segment. The Periplasmic segment spans residues 30 to 179 (LRQNIDLFYT…QKTSMQEGQK (150 aa)). Residues His131 and Tyr135 each coordinate heme. The interval 151 to 179 (MGVADLKGESERDRQEKAYQKTSMQEGQK) is disordered. A compositionally biased stretch (basic and acidic residues) spans 156–169 (LKGESERDRQEKAY). Residues 170 to 179 (QKTSMQEGQK) are compositionally biased toward polar residues.

This sequence belongs to the CcmE/CycJ family.

The protein resides in the cell inner membrane. Its function is as follows. Heme chaperone required for the biogenesis of c-type cytochromes. Transiently binds heme delivered by CcmC and transfers the heme to apo-cytochromes in a process facilitated by CcmF and CcmH. This Pasteurella multocida (strain Pm70) protein is Cytochrome c-type biogenesis protein CcmE.